Consider the following 316-residue polypeptide: MTRHLLTAADLSRDEATAILDDADRFSQALIGREVKKLPTLRGRTVITMFYENSTRTRVSFEVAGKWMSADVINVSASGSSVAKGESLRDTALTLRAAGADALIIRHPASGAAQQLAEWTAAEAGAPSVINAGDGTHEHPTQALLDALTLRQRLGGIEGRRVVIVGDVLHSRVARSNVLLLHTLGAEVVLVAPPTLLPVGVRQWPVTVSHDLDAELPAADAVLMLRVQAERMNGGFFPSAREYSVRYGLSDKRQALLPDSAVVLHPGPMLRGMEISSSVADSSQSAVLQQVSNGVHVRMAVLFHLLVGAEQEAISA.

Carbamoyl phosphate-binding residues include R56 and T57. K84 is an L-aspartate binding site. Positions 106, 139, and 142 each coordinate carbamoyl phosphate. L-aspartate-binding residues include R172 and R226. Residues G267 and P268 each coordinate carbamoyl phosphate.

The protein belongs to the aspartate/ornithine carbamoyltransferase superfamily. ATCase family. As to quaternary structure, heterododecamer (2C3:3R2) of six catalytic PyrB chains organized as two trimers (C3), and six regulatory PyrI chains organized as three dimers (R2).

It carries out the reaction carbamoyl phosphate + L-aspartate = N-carbamoyl-L-aspartate + phosphate + H(+). The protein operates within pyrimidine metabolism; UMP biosynthesis via de novo pathway; (S)-dihydroorotate from bicarbonate: step 2/3. Catalyzes the condensation of carbamoyl phosphate and aspartate to form carbamoyl aspartate and inorganic phosphate, the committed step in the de novo pyrimidine nucleotide biosynthesis pathway. This Mycobacterium sp. (strain MCS) protein is Aspartate carbamoyltransferase catalytic subunit.